The following is an 899-amino-acid chain: Origin recognition complex subunit 5 (899 aa).

Disordered regions lie at residues 27 to 47 (FSSP…NDDT), 100 to 166 (DRIN…EYKD), and 194 to 238 (KNLE…DGNL). Residues 105–160 (SEEETNINDDNNDDNNGDYDDDNNSDDDDDNDDNNNNDDNNNDDDEDVDDFEDIKE) show a composition bias toward acidic residues. Over residues 207–218 (SSDNSMTSSSEE) the composition is skewed to low complexity. Over residues 227–237 (ESDKESDKDGN) the composition is skewed to basic and acidic residues. 303–310 (GLPGMGKT) is a binding site for ATP. The tract at residues 409 to 469 (KRTTENIRSP…NNNSNNVRFN (61 aa)) is disordered. Residues 455-469 (KNNFNNNNSNNVRFN) show a composition bias toward low complexity.

This sequence belongs to the ORC5 family. In terms of assembly, component of the origin recognition complex (ORC). Interacts with PCNA1; the interaction occurs during the trophozoite stage but not at the late schizont stage.

Its subcellular location is the nucleus. It catalyses the reaction ATP + H2O = ADP + phosphate + H(+). In terms of biological role, component of the origin recognition complex (ORC) that binds origins of replication. The sequence is that of Origin recognition complex subunit 5 from Plasmodium falciparum (isolate 3D7).